The following is a 131-amino-acid chain: uncharacterized protein (131 aa).

This is an uncharacterized protein from Staphylococcus aureus.